Here is a 653-residue protein sequence, read N- to C-terminus: MTLWEDFMFEIKSKDGLGRTGILKTEHGTVRTPALMPVIHPGKQTIDVKGPGAEIVITNAYIIYRNPELRERALSDGVHRLIDFDGPIMTDSGSFQLSEYGDIEVENPEIIRFQDEIGTDIGTSLDIPTPPGVSHRRAIEEVEVTLERARESIEYRERMMLNAVVQGSTHPDLRRYCASRLAELPVELHPIGAVVPLMESYRYRELVDAVLSSVSELPPSRPRHLMGAGHPMLFALAVSMGCDLFDSAAYILYAEDDRLLSTEGTYKLENLQEMPCSCSVCTDYTPSELMGMDREERRNLIAEHNLHVSFAEIRKVRQAIHDGNLMELVEERCRAHPRLLEGYRRMSEYLDLIEKFEPRSKRSAFFYTGPESLGRVEVHRHLKRVKEHLGERLALVAPSRRPYSSSLPARIGGFSSLRPQSGGPWRVVVVDLPFGIIPLELDQVYPLAQSDAPGIMDLDGEEFLRGLVRDLMDGDAIVDDALCSELGIELPYKYMGEVETTVDDLDRVRMVADYQFGMGAGELLFTDDVRIERSRNTGKIRHIYAGDELICTMRASDGLLVLGAEGAVRLHKGTDYPAWRVAVNEESEPFARKGKSVFAKFIIDCDNNIRANDEVLIVNADDELLATGKALLCAEEMMDLNHGQAVKTRKGGF.

The Nucleophile role is filled by aspartate 91. Residues aspartate 126 and alanine 193 each contribute to the substrate site. Cysteine 276, cysteine 278, and cysteine 281 together coordinate Zn(2+). The region spanning 578-653 (AWRVAVNEES…QAVKTRKGGF (76 aa)) is the PUA domain.

The protein belongs to the archaeosine tRNA-ribosyltransferase family. It depends on Zn(2+) as a cofactor.

It carries out the reaction guanosine(15) in tRNA + 7-cyano-7-deazaguanine = 7-cyano-7-carbaguanosine(15) in tRNA + guanine. The protein operates within tRNA modification; archaeosine-tRNA biosynthesis. Its function is as follows. Exchanges the guanine residue with 7-cyano-7-deazaguanine (preQ0) at position 15 in the dihydrouridine loop (D-loop) of archaeal tRNAs. The sequence is that of tRNA-guanine(15) transglycosylase from Methanothermobacter thermautotrophicus (strain ATCC 29096 / DSM 1053 / JCM 10044 / NBRC 100330 / Delta H) (Methanobacterium thermoautotrophicum).